A 345-amino-acid chain; its full sequence is Dihydroorotase (345 aa).

2 residues coordinate Zn(2+): His13 and His15. Residues 15-17 and Asn41 contribute to the substrate site; that span reads HLR. Residues Lys100, His137, and His175 each coordinate Zn(2+). Lys100 bears the N6-carboxylysine mark. Residue His137 participates in substrate binding. Residue Leu220 participates in substrate binding. Asp248 contacts Zn(2+). The active site involves Asp248. Substrate is bound by residues His252 and Ala264.

The protein belongs to the metallo-dependent hydrolases superfamily. DHOase family. Class II DHOase subfamily. In terms of assembly, homodimer. Requires Zn(2+) as cofactor.

It catalyses the reaction (S)-dihydroorotate + H2O = N-carbamoyl-L-aspartate + H(+). It functions in the pathway pyrimidine metabolism; UMP biosynthesis via de novo pathway; (S)-dihydroorotate from bicarbonate: step 3/3. Its function is as follows. Catalyzes the reversible cyclization of carbamoyl aspartate to dihydroorotate. The protein is Dihydroorotase of Laribacter hongkongensis (strain HLHK9).